The primary structure comprises 157 residues: Putative tRNA (cytidine(34)-2'-O)-methyltransferase (157 aa).

Residues I79, G104, and I125 each contribute to the S-adenosyl-L-methionine site.

This sequence belongs to the class IV-like SAM-binding methyltransferase superfamily. RNA methyltransferase TrmH family. TrmL subfamily.

The protein resides in the cytoplasm. It catalyses the reaction cytidine(34) in tRNA + S-adenosyl-L-methionine = 2'-O-methylcytidine(34) in tRNA + S-adenosyl-L-homocysteine + H(+). The enzyme catalyses 5-carboxymethylaminomethyluridine(34) in tRNA(Leu) + S-adenosyl-L-methionine = 5-carboxymethylaminomethyl-2'-O-methyluridine(34) in tRNA(Leu) + S-adenosyl-L-homocysteine + H(+). Its function is as follows. Could methylate the ribose at the nucleotide 34 wobble position in tRNA. The chain is Putative tRNA (cytidine(34)-2'-O)-methyltransferase from Geobacillus stearothermophilus (Bacillus stearothermophilus).